The following is an 821-amino-acid chain: Enhancer of polycomb-like protein 1 (821 aa).

Over residues 1-12 (MSSNGGSNTNER) the composition is skewed to polar residues. Disordered stretches follow at residues 1 to 43 (MSSN…TRFR), 427 to 485 (KAAA…QPAM), and 779 to 799 (QFLQ…PINP). Low complexity-rich tracts occupy residues 18-39 (SGSL…DSGS) and 449-465 (EQAA…SSSQ). The span at 786-799 (ENGSPNNATMPINP) shows a compositional bias: polar residues.

The protein belongs to the enhancer of polycomb family. As to quaternary structure, component of the NuA4 histone acetyltransferase complex.

The protein resides in the nucleus. Component of the NuA4 histone acetyltransferase complex which is involved in transcriptional activation of selected genes principally by acetylation of nucleosomal histone H4 and H2A. The NuA4 complex is also involved in DNA repair. Involved in gene silencing by neighboring heterochromatin, blockage of the silencing spreading along the chromosome, and required for cell cycle progression through G2/M. This is Enhancer of polycomb-like protein 1 (EPL1) from Candida glabrata (strain ATCC 2001 / BCRC 20586 / JCM 3761 / NBRC 0622 / NRRL Y-65 / CBS 138) (Yeast).